The sequence spans 132 residues: uncharacterized protein (132 aa).

4 helical membrane-spanning segments follow: residues 6-26 (WIYAVFTILIIGLGLGSRAFS), 34-54 (NTYLGDSLWAAMIFTGCGFLF), 59-79 (TMITGIISLSFCFVIEFSQLY), and 106-126 (IEAYTIGIAACAAIELLVLGI).

Its subcellular location is the cell membrane. This is an uncharacterized protein from Bacillus subtilis (strain 168).